We begin with the raw amino-acid sequence, 348 residues long: MAFFIASSPHLRSKRSTADVMRWVLACALPGLIAQTYFFGYGTLIQLLLAISVAVALEAGIMLLRKRSPISALRDYSAVVTAWLLAVAIPPLSPWWVVVIGLIFAIVIAKHLYGGLGQNPFNPAMIAYVVLLISFPVQMTSWMAPIKLTAEPSSLVDSFSLIFGGFDSDGLSLQQIRTGIDGITMATPLDAFKTSLKAGHTMSETLTQPQFSGFAGIGWEWVNIAYLLGGLILLKLRIIRWHIPMAMLAGLVFTALLAQLFAPGTTASPMIHLLSGATMLGAFFIATDPVSASTTDKGRLIYGFFIGAMVFLIRSWGGFPDGVAFAVLLANMCVPLIDYYTKPRTYGH.

A run of 4 helical transmembrane segments spans residues 23-43 (WVLACALPGLIAQTYFFGYGT), 44-64 (LIQLLLAISVAVALEAGIMLL), 72-91 (ALRDYSAVVTAWLLAVAIPP), and 126-146 (IAYVVLLISFPVQMTSWMAPI). Residue Thr-187 is modified to FMN phosphoryl threonine. A run of 5 helical transmembrane segments spans residues 214–234 (FAGIGWEWVNIAYLLGGLILL), 243–263 (IPMAMLAGLVFTALLAQLFAP), 266–286 (TASPMIHLLSGATMLGAFFIA), 300–320 (LIYGFFIGAMVFLIRSWGGFP), and 321–341 (DGVAFAVLLANMCVPLIDYYT).

The protein belongs to the NqrB/RnfD family. In terms of assembly, the complex is composed of six subunits: RnfA, RnfB, RnfC, RnfD, RnfE and RnfG. It depends on FMN as a cofactor.

The protein resides in the cell inner membrane. In terms of biological role, part of a membrane-bound complex that couples electron transfer with translocation of ions across the membrane. The protein is Ion-translocating oxidoreductase complex subunit D of Vibrio cholerae serotype O1 (strain ATCC 39315 / El Tor Inaba N16961).